Here is a 358-residue protein sequence, read N- to C-terminus: Src kinase-associated phosphoprotein 2 (358 aa).

A phosphoserine mark is found at S6 and S9. Positions P60–P108 are disordered. Y75 carries the post-translational modification Phosphotyrosine. Phosphoserine occurs at positions 87 and 90. In terms of domain architecture, PH spans F116–Q219. Residues Y151 and Y197 each carry the phosphotyrosine modification. S223 bears the Phosphoserine mark. The disordered stretch occupies residues P227 to K293. The span at P243–Q253 shows a compositional bias: low complexity. Residues I255–T270 show a composition bias toward acidic residues. At Y260 the chain carries Phosphotyrosine. Phosphoserine occurs at positions 272, 282, and 285. Positions K274–K293 are enriched in basic and acidic residues. In terms of domain architecture, SH3 spans D296–D357.

It belongs to the SKAP family. Interacts with FYB1, which is required for SKAP2 protein stability. Interacts with PTPNS1. Part of a complex consisting of SKAP2, FYB1 and PTPNS1. Part of a complex consisting of SKAP2, FYB1 and LILRB3. Interacts with LAT, GRB2, PTK2B, and PRAM1. May interact with actin. May interact with FYN, HCK and LYN. Interacts with FASLG.

It localises to the cytoplasm. Its function is as follows. May be involved in B-cell and macrophage adhesion processes. In B-cells, may act by coupling the B-cell receptor (BCR) to integrin activation. May play a role in src signaling pathway. This Rattus norvegicus (Rat) protein is Src kinase-associated phosphoprotein 2 (Skap2).